The chain runs to 228 residues: Octanoyltransferase (228 aa).

The BPL/LPL catalytic domain maps to 30-214; it reads KKIGDTLLLL…YFGKVFGKSL (185 aa). Residues 75–82, 144–146, and 157–159 contribute to the substrate site; these read RGGDVTYH, AIG, and GFA. Cysteine 175 functions as the Acyl-thioester intermediate in the catalytic mechanism.

Belongs to the LipB family.

The protein localises to the cytoplasm. The catalysed reaction is octanoyl-[ACP] + L-lysyl-[protein] = N(6)-octanoyl-L-lysyl-[protein] + holo-[ACP] + H(+). Its pathway is protein modification; protein lipoylation via endogenous pathway; protein N(6)-(lipoyl)lysine from octanoyl-[acyl-carrier-protein]: step 1/2. Its function is as follows. Catalyzes the transfer of endogenously produced octanoic acid from octanoyl-acyl-carrier-protein onto the lipoyl domains of lipoate-dependent enzymes. Lipoyl-ACP can also act as a substrate although octanoyl-ACP is likely to be the physiological substrate. In Caldicellulosiruptor bescii (strain ATCC BAA-1888 / DSM 6725 / KCTC 15123 / Z-1320) (Anaerocellum thermophilum), this protein is Octanoyltransferase.